Here is a 226-residue protein sequence, read N- to C-terminus: uncharacterized protein (226 aa).

This sequence to L.innocua lin1255, lin1742 and lin2408.

This is an uncharacterized protein from Listeria innocua serovar 6a (strain ATCC BAA-680 / CLIP 11262).